The sequence spans 337 residues: Ribosomal RNA small subunit methyltransferase H (337 aa).

S-adenosyl-L-methionine-binding positions include 36–38, aspartate 56, phenylalanine 82, aspartate 100, and glutamine 107; that span reads GGH. The tract at residues 315–337 is disordered; it reads LEERSKRIPNPQSPIPASQGDAQ.

This sequence belongs to the methyltransferase superfamily. RsmH family.

The protein localises to the cytoplasm. It carries out the reaction cytidine(1402) in 16S rRNA + S-adenosyl-L-methionine = N(4)-methylcytidine(1402) in 16S rRNA + S-adenosyl-L-homocysteine + H(+). In terms of biological role, specifically methylates the N4 position of cytidine in position 1402 (C1402) of 16S rRNA. The polypeptide is Ribosomal RNA small subunit methyltransferase H (Xanthomonas euvesicatoria pv. vesicatoria (strain 85-10) (Xanthomonas campestris pv. vesicatoria)).